The chain runs to 46 residues: MKVILKKGPLFEQAEAKAYKYLSGILVQRMNEHQEKLAQKNKKESA.

This is an uncharacterized protein from Bacillus subtilis (strain 168).